A 391-amino-acid chain; its full sequence is Phosphoglycerate kinase (391 aa).

Residues 21 to 23, Arg-36, 59 to 62, Arg-113, and Arg-146 each bind substrate; these read DLN and HLGR. Residues Lys-197, Glu-319, and 345 to 348 contribute to the ATP site; that span reads GGDT.

This sequence belongs to the phosphoglycerate kinase family. Monomer.

Its subcellular location is the cytoplasm. The catalysed reaction is (2R)-3-phosphoglycerate + ATP = (2R)-3-phospho-glyceroyl phosphate + ADP. It participates in carbohydrate degradation; glycolysis; pyruvate from D-glyceraldehyde 3-phosphate: step 2/5. In Shewanella baltica (strain OS223), this protein is Phosphoglycerate kinase.